We begin with the raw amino-acid sequence, 30 residues long: Kalata-B17 (30 aa).

A cross-link (cyclopeptide (Gly-Asn)) is located at residues 1-30; sequence GIPCAESCVYIPCTITALLGCKCKDQVCYN. Cystine bridges form between C4–C21, C8–C23, and C13–C28.

Post-translationally, this is a cyclic peptide.

In terms of biological role, probably participates in a plant defense mechanism. The protein is Kalata-B17 of Oldenlandia affinis.